We begin with the raw amino-acid sequence, 188 residues long: Ribosome maturation factor RimM (188 aa).

Positions 96–169 constitute a PRC barrel domain; it reads DDEFYYADLE…TLLIDPLAAG (74 aa).

It belongs to the RimM family. As to quaternary structure, binds ribosomal protein uS19.

It is found in the cytoplasm. Functionally, an accessory protein needed during the final step in the assembly of 30S ribosomal subunit, possibly for assembly of the head region. Essential for efficient processing of 16S rRNA. May be needed both before and after RbfA during the maturation of 16S rRNA. It has affinity for free ribosomal 30S subunits but not for 70S ribosomes. The sequence is that of Ribosome maturation factor RimM from Rhizobium etli (strain ATCC 51251 / DSM 11541 / JCM 21823 / NBRC 15573 / CFN 42).